The following is a 457-amino-acid chain: Argininosuccinate lyase (457 aa).

It belongs to the lyase 1 family. Argininosuccinate lyase subfamily.

The protein resides in the cytoplasm. It catalyses the reaction 2-(N(omega)-L-arginino)succinate = fumarate + L-arginine. It functions in the pathway amino-acid biosynthesis; L-arginine biosynthesis; L-arginine from L-ornithine and carbamoyl phosphate: step 3/3. In Psychrobacter arcticus (strain DSM 17307 / VKM B-2377 / 273-4), this protein is Argininosuccinate lyase.